Here is a 1020-residue protein sequence, read N- to C-terminus: Tetrathionate reductase subunit A (1020 aa).

The segment at residues 1 to 33 is a signal peptide (tat-type signal); sequence MANLTRRQWLKVGLAVGGMVTFGLSYRDVAKRA. Residues 71-154 enclose the 4Fe-4S Mo/W bis-MGD-type domain; the sequence is QTIAMTQCFG…TLLESLYSPL (84 aa). Cys78, Cys81, Cys85, and Cys140 together coordinate [4Fe-4S] cluster.

It belongs to the prokaryotic molybdopterin-containing oxidoreductase family. As to quaternary structure, probably composed of three subunits: TtrA, TtrB and TtrC. [4Fe-4S] cluster serves as cofactor. The cofactor is Mo-bis(molybdopterin guanine dinucleotide). Post-translationally, predicted to be exported by the Tat system. The position of the signal peptide cleavage has not been experimentally proven.

The protein resides in the periplasm. Its subcellular location is the cell inner membrane. Its function is as follows. Part of a membrane-bound tetrathionate reductase that catalyzes the reduction of tetrathionate to thiosulfate. TtrA is the catalytic subunit. During mice infection, the ability to use tetrathionate as an electron acceptor is a growth advantage for S.typhimurium over the competing microbiota in the lumen of the inflamed gut. This is Tetrathionate reductase subunit A (ttrA) from Salmonella typhimurium (strain LT2 / SGSC1412 / ATCC 700720).